Consider the following 695-residue polypeptide: NADPH--cytochrome P450 reductase (695 aa).

Over 1–8 (MAQLDTLD) the chain is Lumenal. Residues 9 to 31 (LVVLVALLVGSVAYFTKGTYWAV) form a helical membrane-spanning segment. The Cytoplasmic segment spans residues 32-695 (AKDPYASSGP…SGSYQEDVWS (664 aa)). A Flavodoxin-like domain is found at 66–221 (CVIFYGSQTG…DFLAWKEPMW (156 aa)). Residues 72 to 77 (SQTGTA), 123 to 126 (ATYG), 169 to 178 (LGNNTYEHYN), and Asp-204 each bind FMN. Positions 277-538 (HNPFIAPIVE…HVRHSNFKLP (262 aa)) constitute an FAD-binding FR-type domain. Arg-296 lines the NADP(+) pocket. Residues 451–454 (RYYS), 469–471 (TAV), and 486–489 (GVTT) contribute to the FAD site. Residues Thr-552, 614–615 (SR), 620–624 (KVYVQ), and Glu-656 each bind NADP(+). Trp-694 is an FAD binding site.

The protein belongs to the NADPH--cytochrome P450 reductase family. This sequence in the N-terminal section; belongs to the flavodoxin family. In the C-terminal section; belongs to the flavoprotein pyridine nucleotide cytochrome reductase family. It depends on FAD as a cofactor. Requires FMN as cofactor.

Its subcellular location is the endoplasmic reticulum membrane. The protein localises to the mitochondrion outer membrane. The protein resides in the cell membrane. It carries out the reaction 2 oxidized [cytochrome P450] + NADPH = 2 reduced [cytochrome P450] + NADP(+) + H(+). Its function is as follows. This enzyme is required for electron transfer from NADP to cytochrome P450 in microsomes. It can also provide electron transfer to heme oxygenase and cytochrome B5. Involved in ergosterol biosynthesis. The polypeptide is NADPH--cytochrome P450 reductase (Aspergillus oryzae (strain ATCC 42149 / RIB 40) (Yellow koji mold)).